Reading from the N-terminus, the 369-residue chain is Glutamine synthetase 2 cytoplasmic (369 aa).

Residues 32–112 form the GS beta-grasp domain; sequence VQATYVWIDG…VMCDTYKFDG (81 aa). The 251-residue stretch at 119–369 folds into the GS catalytic domain; that stretch reads KRKTCLEVAN…AILRTICLDE (251 aa).

It belongs to the glutamine synthetase family. In terms of assembly, homooctamer.

It localises to the cytoplasm. The enzyme catalyses L-glutamate + NH4(+) + ATP = L-glutamine + ADP + phosphate + H(+). The polypeptide is Glutamine synthetase 2 cytoplasmic (Gs2) (Drosophila melanogaster (Fruit fly)).